The sequence spans 253 residues: Serine/threonine-protein phosphatase 3 (253 aa).

Requires Mn(2+) as cofactor. Post-translationally, phosphorylated by YegI.

The enzyme catalyses O-phospho-L-seryl-[protein] + H2O = L-seryl-[protein] + phosphate. It carries out the reaction O-phospho-L-threonyl-[protein] + H2O = L-threonyl-[protein] + phosphate. Its activity is regulated as follows. Activity dramatically decreases in the presence of the general protein phosphatase inhibitor sodium phosphate. Slightly inhibited by sodium fluoride. Activity decreases in the presence of the metal chelator EDTA. Functionally, PP2C-like phosphatase that can dephosphorylate YegI. In vitro, can hydrolyze p-nitrophenyl phosphate (pNPP) to p-nitrophenol. This chain is Serine/threonine-protein phosphatase 3, found in Escherichia coli (strain K12).